The following is a 298-amino-acid chain: Acetyl-coenzyme A carboxylase carboxyl transferase subunit beta (298 aa).

The region spanning 41–298 (PTIECPECHA…RIVSKLMNLP (258 aa)) is the CoA carboxyltransferase N-terminal domain. Positions 45, 48, 64, and 67 each coordinate Zn(2+). The C4-type zinc-finger motif lies at 45 to 67 (CPECHALVTRTAIAFNAYVCPSC).

Belongs to the AccD/PCCB family. Acetyl-CoA carboxylase is a heterohexamer composed of biotin carboxyl carrier protein (AccB), biotin carboxylase (AccC) and two subunits each of ACCase subunit alpha (AccA) and ACCase subunit beta (AccD). Requires Zn(2+) as cofactor.

The protein localises to the cytoplasm. It catalyses the reaction N(6)-carboxybiotinyl-L-lysyl-[protein] + acetyl-CoA = N(6)-biotinyl-L-lysyl-[protein] + malonyl-CoA. It functions in the pathway lipid metabolism; malonyl-CoA biosynthesis; malonyl-CoA from acetyl-CoA: step 1/1. Component of the acetyl coenzyme A carboxylase (ACC) complex. Biotin carboxylase (BC) catalyzes the carboxylation of biotin on its carrier protein (BCCP) and then the CO(2) group is transferred by the transcarboxylase to acetyl-CoA to form malonyl-CoA. The protein is Acetyl-coenzyme A carboxylase carboxyl transferase subunit beta of Acinetobacter baylyi (strain ATCC 33305 / BD413 / ADP1).